We begin with the raw amino-acid sequence, 1634 residues long: Probable serine/threonine-protein kinase DDB_G0282895 (1634 aa).

An MORN 1 repeat occupies 40 to 63 (YKGNLNENKLKNGKGTFLFPNSIY). Residues 84–131 (QKIQKKSSQSKSQQQPPSQTKKSSSPINLSPRLQGQNPTITTNGSNNN) are disordered. Residues 89 to 109 (KSSQSKSQQQPPSQTKKSSSP) show a composition bias toward low complexity. The span at 110-119 (INLSPRLQGQ) shows a compositional bias: polar residues. Low complexity predominate over residues 120–131 (NPTITTNGSNNN). The stretch at 169 to 191 (YNGKWINGKANGIGCFHFSKDDS) is one MORN 2 repeat. Low complexity-rich tracts occupy residues 273–292 (SNNN…LSPT) and 318–339 (SGSG…PISS). 3 disordered regions span residues 273 to 367 (SNNN…QQQQ), 658 to 750 (TTAT…TFSV), and 783 to 816 (SSIL…NCGQ). Residues 340-351 (GLQHSKTQPNVS) show a composition bias toward polar residues. Composition is skewed to low complexity over residues 352–367 (QSQN…QQQQ), 658–688 (TTAT…TTTT), and 703–715 (PPSQ…SPSS). A compositionally biased stretch (polar residues) spans 716-732 (DQTNLPSIAISSSNGIS). The segment covering 787-813 (NNNNNNNNNNNNNNNNNNNNNNNNNNN) has biased composition (low complexity). A helical transmembrane segment spans residues 1255-1275 (IFIGFMELCVIDELCGFSFIY). A Protein kinase domain is found at 1377 to 1634 (LQILQFLGEG…IIQKLCNHKC (258 aa)). ATP contacts are provided by residues 1383-1391 (LGEGALAEV) and Lys1404. Asp1500 functions as the Proton acceptor in the catalytic mechanism.

Belongs to the protein kinase superfamily. TKL Ser/Thr protein kinase family.

The protein resides in the membrane. It catalyses the reaction L-seryl-[protein] + ATP = O-phospho-L-seryl-[protein] + ADP + H(+). It carries out the reaction L-threonyl-[protein] + ATP = O-phospho-L-threonyl-[protein] + ADP + H(+). In Dictyostelium discoideum (Social amoeba), this protein is Probable serine/threonine-protein kinase DDB_G0282895.